We begin with the raw amino-acid sequence, 427 residues long: Thymidine phosphorylase (427 aa).

This sequence belongs to the thymidine/pyrimidine-nucleoside phosphorylase family. Homodimer.

The enzyme catalyses thymidine + phosphate = 2-deoxy-alpha-D-ribose 1-phosphate + thymine. Functionally, the enzymes which catalyze the reversible phosphorolysis of pyrimidine nucleosides are involved in the degradation of these compounds and in their utilization as carbon and energy sources, or in the rescue of pyrimidine bases for nucleotide synthesis. This chain is Thymidine phosphorylase (deoA), found in Mycobacterium tuberculosis (strain CDC 1551 / Oshkosh).